The primary structure comprises 236 residues: Probable fimbrial chaperone EcpE (236 aa).

Positions 1–27 are cleaved as a signal peptide; the sequence is MFRRRGVTLTKALLTAVCMLAAPLTQA.

The protein belongs to the EcpB/EcpE family.

In terms of biological role, part of the ecpRABCDE operon, which encodes the E.coli common pilus (ECP). ECP is found in both commensal and pathogenic strains and plays a dual role in early-stage biofilm development and host cell recognition. In Escherichia coli (strain K12), this protein is Probable fimbrial chaperone EcpE (ecpE).